The following is a 550-amino-acid chain: Eukaryotic translation initiation factor 3 subunit D (550 aa).

Positions 288–302 are RNA gate; the sequence is DFDLLTVSETANEPP. Positions 526 to 550 are disordered; the sequence is PDGTFSSDEEEDDDDEDEEVEEEES. The segment covering 532–550 has biased composition (acidic residues); sequence SDEEEDDDDEDEEVEEEES.

This sequence belongs to the eIF-3 subunit D family. As to quaternary structure, component of the eukaryotic translation initiation factor 3 (eIF-3) complex, which is composed of 13 subunits: eif3a, eif3b, eif3c, eif3d, eif3e, eif3f, eif3g, eif3h, eif3i, eif3j, eif3k, eif3l and eif3m.

It is found in the cytoplasm. Functionally, mRNA cap-binding component of the eukaryotic translation initiation factor 3 (eIF-3) complex, which is involved in protein synthesis of a specialized repertoire of mRNAs and, together with other initiation factors, stimulates binding of mRNA and methionyl-tRNAi to the 40S ribosome. The eIF-3 complex specifically targets and initiates translation of a subset of mRNAs involved in cell proliferation. In the eIF-3 complex, eif3d specifically recognizes and binds the 7-methylguanosine cap of a subset of mRNAs. This Xenopus laevis (African clawed frog) protein is Eukaryotic translation initiation factor 3 subunit D (eif3d).